The following is a 124-amino-acid chain: Large ribosomal subunit protein bL12 (124 aa).

It belongs to the bacterial ribosomal protein bL12 family. Homodimer. Part of the ribosomal stalk of the 50S ribosomal subunit. Forms a multimeric L10(L12)X complex, where L10 forms an elongated spine to which 2 to 4 L12 dimers bind in a sequential fashion. Binds GTP-bound translation factors.

Forms part of the ribosomal stalk which helps the ribosome interact with GTP-bound translation factors. Is thus essential for accurate translation. This Burkholderia lata (strain ATCC 17760 / DSM 23089 / LMG 22485 / NCIMB 9086 / R18194 / 383) protein is Large ribosomal subunit protein bL12.